Reading from the N-terminus, the 388-residue chain is Processive diacylglycerol beta-glucosyltransferase (388 aa).

It belongs to the glycosyltransferase 28 family. UgtP subfamily.

The protein localises to the cell membrane. The catalysed reaction is a 1,2-diacyl-3-O-(beta-D-glucopyranosyl)-sn-glycerol + UDP-alpha-D-glucose = a 1,2-diacyl-3-O-(beta-D-Glc-(1-&gt;6)-beta-D-Glc)-sn-glycerol + UDP + H(+). It catalyses the reaction a 1,2-diacyl-3-O-(beta-D-Glc-(1-&gt;6)-beta-D-Glc)-sn-glycerol + UDP-alpha-D-glucose = a 1,2-diacyl-3-O-(beta-D-Glc-(1-&gt;6)-beta-D-Glc-(1-&gt;6)-beta-D-Glc)-sn-glycerol + UDP + H(+). The enzyme catalyses a 1,2-diacyl-sn-glycerol + UDP-alpha-D-glucose = a 1,2-diacyl-3-O-(beta-D-glucopyranosyl)-sn-glycerol + UDP + H(+). It participates in glycolipid metabolism; diglucosyl-diacylglycerol biosynthesis. Its function is as follows. Processive glucosyltransferase involved in the biosynthesis of both the bilayer- and non-bilayer-forming membrane glucolipids. Is able to successively transfer up to three glucosyl residues to diacylglycerol (DAG), thereby catalyzing the formation of beta-monoglucosyl-DAG (3-O-(beta-D-glucopyranosyl)-1,2-diacyl-sn-glycerol), beta-diglucosyl-DAG (3-O-(beta-D-glucopyranosyl-beta-(1-&gt;6)-D-glucopyranosyl)-1,2-diacyl-sn-glycerol) and beta-triglucosyl-DAG (3-O-(beta-D-glucopyranosyl-beta-(1-&gt;6)-D-glucopyranosyl-beta-(1-&gt;6)-D-glucopyranosyl)-1,2-diacyl-sn-glycerol). Beta-diglucosyl-DAG is the predominant glycolipid found in Bacillales and is also used as a membrane anchor for lipoteichoic acid (LTA). The polypeptide is Processive diacylglycerol beta-glucosyltransferase (Bacillus cytotoxicus (strain DSM 22905 / CIP 110041 / 391-98 / NVH 391-98)).